A 141-amino-acid chain; its full sequence is Nucleoside diphosphate kinase (141 aa).

ATP-binding residues include K11, F59, R87, T93, R104, and N114. The Pros-phosphohistidine intermediate role is filled by H117.

This sequence belongs to the NDK family. In terms of assembly, homotetramer. Mg(2+) is required as a cofactor.

The protein localises to the cytoplasm. It carries out the reaction a 2'-deoxyribonucleoside 5'-diphosphate + ATP = a 2'-deoxyribonucleoside 5'-triphosphate + ADP. The catalysed reaction is a ribonucleoside 5'-diphosphate + ATP = a ribonucleoside 5'-triphosphate + ADP. In terms of biological role, major role in the synthesis of nucleoside triphosphates other than ATP. The ATP gamma phosphate is transferred to the NDP beta phosphate via a ping-pong mechanism, using a phosphorylated active-site intermediate. This chain is Nucleoside diphosphate kinase, found in Leptothrix cholodnii (strain ATCC 51168 / LMG 8142 / SP-6) (Leptothrix discophora (strain SP-6)).